We begin with the raw amino-acid sequence, 536 residues long: Probable cytochrome P450 318a1 (536 aa).

Residues 439–457 (EEEQLSKGHNDSGSGEKRR) show a composition bias toward basic and acidic residues. The segment at 439–460 (EEEQLSKGHNDSGSGEKRRQRD) is disordered. A heme-binding site is contributed by Cys477.

It belongs to the cytochrome P450 family. Heme is required as a cofactor.

The protein resides in the endoplasmic reticulum membrane. It is found in the microsome membrane. Its function is as follows. May be involved in the metabolism of insect hormones and in the breakdown of synthetic insecticides. This is Probable cytochrome P450 318a1 (Cyp318a1) from Drosophila melanogaster (Fruit fly).